The primary structure comprises 235 residues: Uridylate kinase (235 aa).

9–12 (KLSG) is an ATP binding site. G51 is a UMP binding site. Positions 52 and 56 each coordinate ATP. Residues D71 and 133 to 140 (SGNPFFTT) contribute to the UMP site. 3 residues coordinate ATP: T160, Y166, and D169.

It belongs to the UMP kinase family. As to quaternary structure, homohexamer.

Its subcellular location is the cytoplasm. The catalysed reaction is UMP + ATP = UDP + ADP. It participates in pyrimidine metabolism; CTP biosynthesis via de novo pathway; UDP from UMP (UMPK route): step 1/1. With respect to regulation, inhibited by UTP. Its function is as follows. Catalyzes the reversible phosphorylation of UMP to UDP. In Gloeobacter violaceus (strain ATCC 29082 / PCC 7421), this protein is Uridylate kinase.